Here is a 419-residue protein sequence, read N- to C-terminus: MSIGVQSSGINISHAELSRLVDAGKSEQGDKAVRDDGRALARADAALAAVVGERVAARRDAVAGSGAQRVELARPKPDAQTRATDRRTVSGLEREHKRLAASQTPRVTGMHDALVQRHVSLDGAKAAHGEGVKRAAGDAPRAAADAPQRFAFADDKAFDAMLALGAAMQKNVQSDLAMQGKLTMLAHDAMMSAAAQDRSIGAAQMTAAIAGGALQATTSLGGAMQQMKSLSTKSMSIEKELKPQAELKQFHAEQALELRGINKPVLSNDEVSHVKIKRDTGETVRHEIDHGGERMSDEHASVLAQEAPARQHRIDMHGMRHEENLVKAGRQQMKGDLLQSGGQIGKNQIDGASAQQQGADRAEQKEDENAQQTAMAAASTRDEAAHRSREAAQKAIDAAKSQVANDNAVAAQVAGNLRT.

Disordered regions lie at residues 62 to 91 (VAGSGAQRVELARPKPDAQTRATDRRTVSG) and 338 to 402 (LQSG…AKSQ). 2 stretches are compositionally biased toward basic and acidic residues: residues 71 to 91 (ELARPKPDAQTRATDRRTVSG) and 380 to 392 (TRDEAAHRSREAA).

It belongs to the SctB/SipC family.

The protein resides in the secreted. The sequence is that of Effector protein BipC (bipC) from Burkholderia mallei (strain NCTC 10247).